The following is a 433-amino-acid chain: ATP-dependent protease ATPase subunit HslU (433 aa).

Residues valine 18, 60–65 (GVGKTE), aspartate 246, glutamate 311, and arginine 383 contribute to the ATP site.

It belongs to the ClpX chaperone family. HslU subfamily. A double ring-shaped homohexamer of HslV is capped on each side by a ring-shaped HslU homohexamer. The assembly of the HslU/HslV complex is dependent on binding of ATP.

It is found in the cytoplasm. Its function is as follows. ATPase subunit of a proteasome-like degradation complex; this subunit has chaperone activity. The binding of ATP and its subsequent hydrolysis by HslU are essential for unfolding of protein substrates subsequently hydrolyzed by HslV. HslU recognizes the N-terminal part of its protein substrates and unfolds these before they are guided to HslV for hydrolysis. The polypeptide is ATP-dependent protease ATPase subunit HslU (Nitrobacter winogradskyi (strain ATCC 25391 / DSM 10237 / CIP 104748 / NCIMB 11846 / Nb-255)).